Consider the following 100-residue polypeptide: uncharacterized protein (100 aa).

Residues 13-32 traverse the membrane as a helical segment; it reads IWSSLNIICLMVTFLNVQLS.

It is found in the mitochondrion membrane. This is an uncharacterized protein from Schizosaccharomyces pombe (strain 972 / ATCC 24843) (Fission yeast).